The chain runs to 55 residues: Large ribosomal subunit protein bL33 (55 aa).

Belongs to the bacterial ribosomal protein bL33 family.

This is Large ribosomal subunit protein bL33 from Baumannia cicadellinicola subsp. Homalodisca coagulata.